The sequence spans 137 residues: Large ribosomal subunit protein uL16 (137 aa).

The protein belongs to the universal ribosomal protein uL16 family. Part of the 50S ribosomal subunit.

Binds 23S rRNA and is also seen to make contacts with the A and possibly P site tRNAs. The chain is Large ribosomal subunit protein uL16 from Methylorubrum extorquens (strain CM4 / NCIMB 13688) (Methylobacterium extorquens).